Consider the following 1196-residue polypeptide: Protein BRASSINOSTEROID INSENSITIVE 1 (1196 aa).

Residues 1-23 (MKTFSSFFLSVTTLFFFSFFSLS) form the signal peptide. The Cys pair 1 signature appears at 62-69 (CTFDGVTC). LRR repeat units follow at residues 71–98 (DDKV…LLSL), 99–121 (TGLE…FKCS), 122–146 (ASLT…SLGS), 148–169 (SGLK…VSGG), 172–197 (LNSL…VLSD), 199–221 (CGEL…VSRC), 222–244 (VNLE…LGDC), 245–268 (SALQ…ISTC), 269–290 (TELK…PLPL), 291–314 (KSLQ…LSGA), 316–338 (DTLT…FFGS), 339–363 (CSLL…TLLK), 364–388 (MRGL…LTNL), 390–413 (ASLL…LCQN), 415–439 (KNTL…LSNC), 441–463 (ELVS…LGSL), 464–487 (SKLR…LMYV), 488–511 (KTLE…LSNC), 513–535 (NLNW…IGRL), 536–559 (ENLA…LGDC), and 561–583 (SLIW…MFKQ). N-linked (GlcNAc...) asparagine glycosylation is present at asparagine 112. Asparagine 154 carries N-linked (GlcNAc...) asparagine glycosylation. Asparagine 233 carries an N-linked (GlcNAc...) asparagine glycan. N-linked (GlcNAc...) asparagine glycosylation is present at asparagine 275. Asparagine 351, asparagine 387, asparagine 401, and asparagine 438 each carry an N-linked (GlcNAc...) asparagine glycan. N-linked (GlcNAc...) asparagine glycosylation is present at asparagine 510. N-linked (GlcNAc...) asparagine glycans are attached at residues asparagine 545 and asparagine 573. Residue tyrosine 597 coordinates brassinolide. N-linked (GlcNAc...) asparagine glycosylation occurs at asparagine 636. The segment at 640–642 (RVY) is SERK1 binding. Brassinolide-binding residues include tyrosine 642 and serine 647. A glycan (N-linked (GlcNAc...) asparagine) is linked at asparagine 653. 4 LRR repeats span residues 653–677 (NGSM…IGSM), 678–701 (PYLF…VGDL), 702–725 (RGLN…MSAL), and 727–750 (MLTE…QFET). Brassinolide is bound at residue asparagine 705. Positions 726-729 (TMLT) are SERK1 binding. N-linked (GlcNAc...) asparagine glycosylation occurs at asparagine 737. Positions 746-750 (GQFET) are SERK1 binding. The short motif at 763–770 (CGYPLPRC) is the Cys pair 2 element. Residues 793-813 (AGSVAMGLLFSFVCIFGLILV) traverse the membrane as a helical segment. At tyrosine 831 the chain carries Phosphotyrosine. Serine 838 is modified (phosphoserine). Phosphothreonine is present on residues threonine 842, threonine 846, and threonine 851. At serine 858 the chain carries Phosphoserine. Residues threonine 872 and threonine 880 each carry the phosphothreonine modification. The 276-residue stretch at 883 to 1158 (FHNDSLIGSG…VQVMAMFKEI (276 aa)) folds into the Protein kinase domain. 2 positions are modified to phosphoserine: serine 887 and serine 891. Residues 889–897 (IGSGGFGDV) and lysine 911 each bind ATP. Tyrosine 956 bears the Phosphotyrosine mark. Residues 957–959 (EFM) and 963–966 (SLED) contribute to the ATP site. Position 981 is a phosphoserine (serine 981). Phosphothreonine is present on threonine 982. Residue aspartate 1009 is the Proton acceptor of the active site. Residues 1009–1014 (DMKSSN) and aspartate 1027 contribute to the ATP site. At serine 1035 the chain carries Phosphoserine. Residue threonine 1039 is modified to Phosphothreonine. Phosphoserine occurs at positions 1042 and 1044. Phosphothreonine is present on residues threonine 1045 and threonine 1049. Position 1052 is a phosphotyrosine (tyrosine 1052). Residue serine 1060 is modified to Phosphoserine. Tyrosine 1072 carries the post-translational modification Phosphotyrosine. Phosphoserine occurs at positions 1166 and 1168. Threonine 1169 carries the phosphothreonine modification. A phosphoserine mark is found at serine 1172 and serine 1179. Position 1180 is a phosphothreonine (threonine 1180). At serine 1187 the chain carries Phosphoserine.

This sequence belongs to the protein kinase superfamily. Ser/Thr protein kinase family. In terms of assembly, monomer or homodimer in the plasma membrane. Heterodimer with BAK1 in the endosomes. Interacts with SERK1 and TTL in a kinase-dependent manner. Bind to SERK1 in a brassinolide-dependent manner. Component of the SERK1 signaling complex, composed of KAPP, CDC48A, GRF6 or GRF7, SERK1, SERK2, SERK3/BAK1 and BRI1. Interacts with CDG1. No interactions with PSKR1 or CNGC17. Interacts with BIK1. Interacts with B'ALPHA, B'BETA, B'GAMMA and B'ETA. Interacts with BSK1 and BSK3. Interacts with BSK5, BSK6 and BSK11. Post-translationally, autophosphorylated on Tyr-831, Tyr-956 and maybe Tyr-1072. Phosphorylated on at least 12 sites, with a preference for Ser residues. Transphosphorylated on Ser-887 by SERK1 and on Ser-838, Thr-846, Ser-858 and Ser-1166 by BAK1. Phosphorylation on Ser-1166 enhances the kinase activity. Glycosylated. As to expression, expressed ubiquitously.

The protein localises to the cell membrane. It localises to the endosome membrane. It catalyses the reaction L-seryl-[protein] + ATP = O-phospho-L-seryl-[protein] + ADP + H(+). The catalysed reaction is L-threonyl-[protein] + ATP = O-phospho-L-threonyl-[protein] + ADP + H(+). It carries out the reaction L-tyrosyl-[protein] + ATP = O-phospho-L-tyrosyl-[protein] + ADP + H(+). With respect to regulation, activated by Ser and Thr phosphorylation. Its function is as follows. Receptor with a dual specificity kinase activity acting on both serine/threonine- and tyrosine-containing substrates. Regulates, in response to brassinosteroid binding, a signaling cascade involved in plant development, including expression of light- and stress-regulated genes, promotion of cell elongation, normal leaf and chloroplast senescence, and flowering. Binds brassinolide (BL), and less effectively castasterone (CS), but not 2,3,22,23-O-tetramethylbrassinolide or ecdysone. May be involved in a feedback regulation of brassinosteroid biosynthesis. Phosphorylates BRI1-associated receptor kinase 1 (BAK1), Transthyretin-Like protein (TTL) and SERK1 on 'Ser-299' and 'Thr-462' in vitro. May have a guanylyl cyclase activity. Phosphorylates BSK1, BSK2 and BSK3 in vitro. Phosphorylates BSK1, BSK3, BSK5, BSK6, BSK8 and BSK11 in vitro. The chain is Protein BRASSINOSTEROID INSENSITIVE 1 from Arabidopsis thaliana (Mouse-ear cress).